A 480-amino-acid polypeptide reads, in one-letter code: Glycogen synthase (480 aa).

Belongs to the glycosyltransferase 1 family. Bacterial/plant glycogen synthase subfamily.

It carries out the reaction [(1-&gt;4)-alpha-D-glucosyl](n) + ADP-alpha-D-glucose = [(1-&gt;4)-alpha-D-glucosyl](n+1) + ADP + H(+). The protein operates within glycan biosynthesis; glycogen biosynthesis. Functionally, synthesizes alpha-1,4-glucan chains using ADP-glucose. In Rhizobium etli (strain ATCC 51251 / DSM 11541 / JCM 21823 / NBRC 15573 / CFN 42), this protein is Glycogen synthase.